The sequence spans 192 residues: Transposon Tn552 DNA-invertase BinR (192 aa).

Residues 1 to 136 enclose the Resolvase/invertase-type recombinase catalytic domain; that stretch reads MKIGYARVST…AGRIAARARG (136 aa). The active-site O-(5'-phospho-DNA)-serine intermediate is serine 9. The segment at residues 163–182 is a DNA-binding region (H-T-H motif); that stretch reads IKTIAEQWKVSRTTIYRYLN.

This sequence belongs to the site-specific recombinase resolvase family.

DNA-invertase, mediating the inversion of inv. This is Transposon Tn552 DNA-invertase BinR (resR) from Staphylococcus aureus.